A 1342-amino-acid chain; its full sequence is DNA-directed RNA polymerase subunit beta (1342 aa).

This sequence belongs to the RNA polymerase beta chain family. As to quaternary structure, the RNAP catalytic core consists of 2 alpha, 1 beta, 1 beta' and 1 omega subunit. When a sigma factor is associated with the core the holoenzyme is formed, which can initiate transcription.

The catalysed reaction is RNA(n) + a ribonucleoside 5'-triphosphate = RNA(n+1) + diphosphate. Its function is as follows. DNA-dependent RNA polymerase catalyzes the transcription of DNA into RNA using the four ribonucleoside triphosphates as substrates. This chain is DNA-directed RNA polymerase subunit beta, found in Histophilus somni (strain 2336) (Haemophilus somnus).